The chain runs to 269 residues: Meiotic drive suppressor wtf5 (269 aa).

The segment at 1 to 65 (MKNNYTSLKS…NTHRENHSYG (65 aa)) is disordered. Over residues 19 to 30 (KTDHEIDLEKGP) the composition is skewed to basic and acidic residues. 3 helical membrane passes run 73–95 (LLII…VCYL), 110–132 (WTLF…YFYE), and 206–228 (WGLK…VFIA).

This sequence belongs to the WTF family. In terms of assembly, homomer. Interacts with other proteins that exhibit high sequence similarity.

The protein localises to the spore membrane. The protein resides in the vacuole membrane. Acts as a suppressor component of the dual wtf meiotic drive system, and can suppress but not confer meiotic drive by compatible poisons. Wtf meiotic drive systems promote unequal transmission of alleles from the parental zygote to progeny spores by encoding a poison and an antidote from the same locus; the poison is trans-acting and forms toxic aggregates in all spores within an ascus, wherease the antidote is spore-specific and targets aggregates for degradation by the vacuole. Meiotic drive by wtf systems therefore lead to poisoning of all progeny that do not inherit the dual poison/antidote allele, or express a compatible antidote. This chain is Meiotic drive suppressor wtf5, found in Schizosaccharomyces pombe (strain 972 / ATCC 24843) (Fission yeast).